The primary structure comprises 557 residues: Dihydroxy-acid dehydratase (557 aa).

Cys-50 provides a ligand contact to [2Fe-2S] cluster. Asp-82 serves as a coordination point for Mg(2+). Cys-123 lines the [2Fe-2S] cluster pocket. 2 residues coordinate Mg(2+): Asp-124 and Lys-125. Lys-125 carries the post-translational modification N6-carboxylysine. Cys-195 is a [2Fe-2S] cluster binding site. Residue Glu-447 participates in Mg(2+) binding. Catalysis depends on Ser-473, which acts as the Proton acceptor.

Belongs to the IlvD/Edd family. Homodimer. It depends on [2Fe-2S] cluster as a cofactor. Requires Mg(2+) as cofactor.

It catalyses the reaction (2R)-2,3-dihydroxy-3-methylbutanoate = 3-methyl-2-oxobutanoate + H2O. It carries out the reaction (2R,3R)-2,3-dihydroxy-3-methylpentanoate = (S)-3-methyl-2-oxopentanoate + H2O. The protein operates within amino-acid biosynthesis; L-isoleucine biosynthesis; L-isoleucine from 2-oxobutanoate: step 3/4. It functions in the pathway amino-acid biosynthesis; L-valine biosynthesis; L-valine from pyruvate: step 3/4. Functions in the biosynthesis of branched-chain amino acids. Catalyzes the dehydration of (2R,3R)-2,3-dihydroxy-3-methylpentanoate (2,3-dihydroxy-3-methylvalerate) into 2-oxo-3-methylpentanoate (2-oxo-3-methylvalerate) and of (2R)-2,3-dihydroxy-3-methylbutanoate (2,3-dihydroxyisovalerate) into 2-oxo-3-methylbutanoate (2-oxoisovalerate), the penultimate precursor to L-isoleucine and L-valine, respectively. This is Dihydroxy-acid dehydratase from Burkholderia mallei (strain NCTC 10247).